Here is a 335-residue protein sequence, read N- to C-terminus: Anthranilate phosphoribosyltransferase (335 aa).

Residues glycine 80, 83–84, threonine 88, 90–93, 108–116, and serine 120 contribute to the 5-phospho-alpha-D-ribose 1-diphosphate site; these read GD, NIST, and KHGNRAVSS. Glycine 80 is an anthranilate binding site. Position 92 (serine 92) interacts with Mg(2+). An anthranilate-binding site is contributed by asparagine 111. Position 166 (arginine 166) interacts with anthranilate. The Mg(2+) site is built by aspartate 225 and glutamate 226.

It belongs to the anthranilate phosphoribosyltransferase family. In terms of assembly, homodimer. Mg(2+) is required as a cofactor.

It catalyses the reaction N-(5-phospho-beta-D-ribosyl)anthranilate + diphosphate = 5-phospho-alpha-D-ribose 1-diphosphate + anthranilate. It functions in the pathway amino-acid biosynthesis; L-tryptophan biosynthesis; L-tryptophan from chorismate: step 2/5. Its function is as follows. Catalyzes the transfer of the phosphoribosyl group of 5-phosphorylribose-1-pyrophosphate (PRPP) to anthranilate to yield N-(5'-phosphoribosyl)-anthranilate (PRA). The polypeptide is Anthranilate phosphoribosyltransferase (Clostridium kluyveri (strain NBRC 12016)).